The chain runs to 482 residues: FAD-dependent monooxygenase esdpE (482 aa).

Residues 1–21 (MGAERLKVIIVGGSIAGLTLA) form the signal peptide. FAD contacts are provided by glutamate 35 and arginine 108. Asparagine 243 carries an N-linked (GlcNAc...) asparagine glycan. FAD is bound by residues aspartate 308 and alanine 321. A helical transmembrane segment spans residues 440–460 (LFSGSLLLIMSVALLFGVICW).

Belongs to the paxM FAD-dependent monooxygenase family. FAD is required as a cofactor.

The protein resides in the membrane. It participates in secondary metabolite biosynthesis; terpenoid biosynthesis. In terms of biological role, FAD-dependent monooxygenase; part of the cluster that mediates the biosynthesis of shearones, diterpenoid pyrones (DPs) which are structurally diverse meroterpenoids consisting of a diterpene linked by a pyrone, and which may exhibit a range of bioactivities. Within the pathway, esdpE takes part to the biosynthesis of the molecular scaffold by catalyzing the formation of an (S)-epoxide ring at the terminal olefin of the geranylgeranyl group. The molecular scaffold is commonly biosynthesized by a series of enzymes including the non-reducing polyketide synthase (NR-PKS) esdpA that generates an alpha-pyrone; the prenyltransferase esdpC that attaches a geranylgeranyl pyrophosphate (GGPP) produced by the GGPP synthase (GGPPS) esdpD onto the pyrone unit; the FAD-dependent monooxygenase esdpE that converts an olefin on the diterpene unit into an epoxide; and the terpene cyclase esdpB that catalyzes the cyclization reactions to give the molecular backbone shearone A. In the modification steps, esdpF oxidizes the hydroxy group to a ketone at C-3 and esdpG then attaches hydroxy groups at both C-11 and C-12. After that, esdpI hydroxylates at C-20 and esdpH hydroxylates at C-6'. The ether bridge is generated by nucleophilic attack of the hydroxy group at C-20 to the carbonyl carbon at C-3. EsdpH can also functions prior to esdpI. The different combinations of these modification enzymes lead to the production of diverse shearone derivatives, shearone I being the end product of the pathway. The alpha-ketoglutarate-dependent dioxygenase esdpJ seems not to be involved in this pathway. The protein is FAD-dependent monooxygenase esdpE of Penicillium shearii (Eupenicillium shearii).